The chain runs to 388 residues: uncharacterized protein (388 aa).

This is an uncharacterized protein from Ictaluridae (bullhead catfishes).